We begin with the raw amino-acid sequence, 302 residues long: Taste receptor type 2 member 104 (302 aa).

The Extracellular portion of the chain corresponds to 1–7 (MLSALES). Residues 8-28 (ILLSVATSEAMLGVLGNTFIV) form a helical membrane-spanning segment. Residues 29-43 (LVNYTDWVRNKKLSK) lie on the Cytoplasmic side of the membrane. Residues 44–64 (INFILTGLAISRIFTIWIITL) form a helical membrane-spanning segment. Topologically, residues 65–87 (DAYTKVFLLTMLMPSSLHECMSY) are extracellular. The helical transmembrane segment at 88 to 108 (IWVIINHLSVWFSTSLGIFYF) threads the bilayer. Over 109–128 (LKIANFSHYIFLWMKRRADK) the chain is Cytoplasmic. A helical membrane pass occupies residues 129 to 149 (VFVFLIVFLIITWLASFPLAV). The Extracellular segment spans residues 150–182 (KVIKDVKIYQSNTSWLIHLEKSELLINYVFANM). The N-linked (GlcNAc...) asparagine glycan is linked to Asn161. Residues 183-203 (GPISLFIVAIIACFLLTISLW) traverse the membrane as a helical segment. Over 204–229 (RHSRQMQSIGSGFRDLNTEAHMKAMK) the chain is Cytoplasmic. The helical transmembrane segment at 230–250 (VLIAFIILFILYFLGILIETL) threads the bilayer. At 251 to 259 (CLFLTNNKL) the chain is on the extracellular side. The helical transmembrane segment at 260-280 (LFIFGFTLSAMYPCCHSFILI) threads the bilayer. The Cytoplasmic segment spans residues 281–302 (LTSRELKQATMRALQRLKCCET).

The protein belongs to the G-protein coupled receptor T2R family.

The protein localises to the membrane. In terms of biological role, putative taste receptor which may play a role in the perception of bitterness. The protein is Taste receptor type 2 member 104 of Mus musculus (Mouse).